The sequence spans 253 residues: Coenzyme F420:L-glutamate ligase (253 aa).

GTP contacts are provided by residues 9-12 (LPEI), 38-39 (ST), and lysine 43. Aspartate 113 contacts a divalent metal cation. GTP is bound at residue asparagine 116. The a divalent metal cation site is built by aspartate 150, threonine 151, and glutamate 208. 206–213 (SGEGDDGT) contacts GTP.

It belongs to the CofE family. As to quaternary structure, homodimer. It depends on Mg(2+) as a cofactor. The cofactor is Mn(2+). K(+) serves as cofactor.

The catalysed reaction is oxidized coenzyme F420-0 + GTP + L-glutamate = oxidized coenzyme F420-1 + GDP + phosphate + H(+). It catalyses the reaction oxidized coenzyme F420-1 + GTP + L-glutamate = oxidized coenzyme F420-2 + GDP + phosphate + H(+). Its pathway is cofactor biosynthesis; coenzyme F420 biosynthesis. Catalyzes the GTP-dependent successive addition of two or more gamma-linked L-glutamates to the L-lactyl phosphodiester of 7,8-didemethyl-8-hydroxy-5-deazariboflavin (F420-0) to form coenzyme F420-0-glutamyl-glutamate (F420-2) or polyglutamated F420 derivatives. The chain is Coenzyme F420:L-glutamate ligase from Halobacterium salinarum (strain ATCC 29341 / DSM 671 / R1).